A 308-amino-acid chain; its full sequence is UPF0282 protein YG5714_2245 (308 aa).

Belongs to the UPF0282 family.

The chain is UPF0282 protein YG5714_2245 from Saccharolobus islandicus (strain Y.G.57.14 / Yellowstone #1) (Sulfolobus islandicus).